A 345-amino-acid chain; its full sequence is Arginase (345 aa).

A compositionally biased stretch (basic and acidic residues) spans 1–16; sequence MKETAAAKFERQHMDS. The segment at 1–34 is disordered; the sequence is MKETAAAKFERQHMDSPDLGTDDDDKMSPATSPF. Isoleucine 101, histidine 124, serine 126, glycine 128, isoleucine 232, and cysteine 234 together coordinate Mn(2+).

This sequence belongs to the arginase family. In terms of assembly, homotrimer. The cofactor is Mn(2+).

The enzyme catalyses L-arginine + H2O = urea + L-ornithine. It participates in nitrogen metabolism; urea cycle; L-ornithine and urea from L-arginine: step 1/1. With respect to regulation, the enzyme activity is increased in the range of 20-50% upon the addition of Mn(2+) (1 mM), Co(2+) (1 mM), Ni(2+) (1 and 5 mM) and K(+) (5 mM). In contrast, the addition of Cu(2+), Zn(2+), Ca(2+), Mg(2+), Fe(2+) (both 1 and 5 mM), and Co(2+) (5 mM) strongly suppresses the arginase activity. SDS (1%) and EDTA (1 mM) are the most potent inhibitors. Reducing agents DTT (1 mM), PMSF (1 mM) and beta-mercaptoethanol (1 mM) also significantly inhibit activity by 85%, 64% and 35%, respectively. Surfactants Triton X-100 (1%), Tween-80 (1%) and Tween-20 (1%) are more tolerant, showing a slight decrease of arginase activity in the range of 10-30%. Its function is as follows. Cold-active L-arginase that catalyzes the hydrolysis of L-arginine to L-ornithine and urea, an essential reaction in the urea cycle for toxic ammonia removal and cell proliferation. Is not able to use D-arginine or L-canavanine as substrates. The polypeptide is Arginase (Glaciozyma antarctica (strain PI12) (Antarctic psychrophilic yeast)).